Reading from the N-terminus, the 70-residue chain is Brevinin-1CG3 (70 aa).

The N-terminal stretch at 1–22 (MFTLKKSLLLLFFLGTINLSLC) is a signal peptide. Positions 23–44 (EQERNAEEERRDDSDKRDVEVE) are cleaved as a propeptide — removed in mature form. A disulfide bridge connects residues Cys64 and Cys70.

Belongs to the frog skin active peptide (FSAP) family. Brevinin subfamily. In terms of tissue distribution, expressed by the skin glands.

The protein localises to the secreted. Antimicrobial peptide active against a variety of Gram-positive and some Gram-negative bacterial strains. Has antifungal activity against a slime mold isolate. Has hemolytic activity against human erythrocytes. This chain is Brevinin-1CG3, found in Amolops chunganensis (Chungan torrent frog).